A 263-amino-acid chain; its full sequence is 3-deoxy-manno-octulosonate cytidylyltransferase (263 aa).

It belongs to the KdsB family.

The protein resides in the cytoplasm. It carries out the reaction 3-deoxy-alpha-D-manno-oct-2-ulosonate + CTP = CMP-3-deoxy-beta-D-manno-octulosonate + diphosphate. The protein operates within nucleotide-sugar biosynthesis; CMP-3-deoxy-D-manno-octulosonate biosynthesis; CMP-3-deoxy-D-manno-octulosonate from 3-deoxy-D-manno-octulosonate and CTP: step 1/1. Its pathway is bacterial outer membrane biogenesis; lipopolysaccharide biosynthesis. In terms of biological role, activates KDO (a required 8-carbon sugar) for incorporation into bacterial lipopolysaccharide in Gram-negative bacteria. The sequence is that of 3-deoxy-manno-octulosonate cytidylyltransferase from Burkholderia thailandensis (strain ATCC 700388 / DSM 13276 / CCUG 48851 / CIP 106301 / E264).